The sequence spans 670 residues: MAKSSFFNKHLLLSLLILLQSCLLSSSSSTDSETLLNFKLTADSTGKLNSWNTTTNPCQWTGVSCNRNRVTRLVLEDINLTGSISSLTSLTSLRVLSLKHNNLSGPIPNLSNLTALKLLFLSNNQFSGNFPTSITSLTRLYRLDLSFNNFSGQIPPDLTDLTHLLTLRLESNRFSGQIPNINLSDLQDFNVSGNNFNGQIPNSLSQFPESVFTQNPSLCGAPLLKCTKLSSDPTKPGRPDEAKASPLNKPETVPSSPTSIHGGDKSNNTSRISTISLIAIILGDFIILSFVSLLLYYCFWRQYAVNKKKHSKILEGEKIVYSSNPYPTSTQNNNNQNQQVGDKGKMVFFEGTRRFELEDLLRASAEMLGKGGFGTAYKAVLEDGNEVAVKRLKDAVTVAGKKEFEQQMEVLGRLRHTNLVSLKAYYFAREEKLLVYDYMPNGSLFWLLHGNRGPGRTPLDWTTRLKIAAGAARGLAFIHGSCKTLKLTHGDIKSTNVLLDRSGNARVSDFGLSIFAPSQTVAKSNGYRAPELIDGRKHTQKSDVYSFGVLLLEILTGKCPNMVETGHSGGAVDLPRWVQSVVREEWTAEVFDLELMRYKDIEEEMVGLLQIAMACTAVAADHRPKMGHVVKLIEDIRGGGSEASPCNDGINSAVDSPCLSEDTCGGTTSQ.

An N-terminal signal peptide occupies residues 1-29 (MAKSSFFNKHLLLSLLILLQSCLLSSSSS). At 30 to 274 (TDSETLLNFK…KSNNTSRIST (245 aa)) the chain is on the extracellular side. Asn52, Asn79, Asn102, Asn109, and Asn112 each carry an N-linked (GlcNAc...) asparagine glycan. 6 LRR repeats span residues 69-91 (RVTR…TSLT), 92-114 (SLRV…SNLT), 115-137 (ALKL…ITSL), 139-162 (RLYR…TDLT), 163-185 (HLLT…NLSD), and 186-207 (LQDF…LSQF). N-linked (GlcNAc...) asparagine glycosylation is found at Asn149, Asn182, and Asn190. A disordered region spans residues 230 to 266 (SSDPTKPGRPDEAKASPLNKPETVPSSPTSIHGGDKS). Residues 253–266 (VPSSPTSIHGGDKS) are compositionally biased toward polar residues. Asn268 is a glycosylation site (N-linked (GlcNAc...) asparagine). A helical transmembrane segment spans residues 275 to 295 (ISLIAIILGDFIILSFVSLLL). The Cytoplasmic portion of the chain corresponds to 296–670 (YYCFWRQYAV…EDTCGGTTSQ (375 aa)). A Protein kinase domain is found at 362 to 636 (RASAEMLGKG…GHVVKLIEDI (275 aa)). Ser364 carries the phosphoserine modification. Residues 368–376 (LGKGGFGTA) and Lys390 contribute to the ATP site. Ser443 bears the Phosphoserine mark. Thr463 carries the phosphothreonine modification. Asp491 serves as the catalytic Proton acceptor. The residue at position 616 (Thr616) is a Phosphothreonine.

The protein belongs to the protein kinase superfamily. Ser/Thr protein kinase family.

It localises to the cell membrane. It carries out the reaction L-seryl-[protein] + ATP = O-phospho-L-seryl-[protein] + ADP + H(+). The catalysed reaction is L-threonyl-[protein] + ATP = O-phospho-L-threonyl-[protein] + ADP + H(+). The polypeptide is Probable leucine-rich repeat receptor-like protein kinase At1g68400 (Arabidopsis thaliana (Mouse-ear cress)).